The chain runs to 177 residues: Nucleoside triphosphate/diphosphate phosphatase (177 aa).

The active-site Proton donor is the R23. N87, D103, D105, D107, D120, and E123 together coordinate Mg(2+).

It belongs to the Ntdp family. The cofactor is Mg(2+).

The catalysed reaction is a ribonucleoside 5'-triphosphate + H2O = a ribonucleoside 5'-diphosphate + phosphate + H(+). It catalyses the reaction a ribonucleoside 5'-diphosphate + H2O = a ribonucleoside 5'-phosphate + phosphate + H(+). In terms of biological role, has nucleoside phosphatase activity towards nucleoside triphosphates and nucleoside diphosphates. The protein is Nucleoside triphosphate/diphosphate phosphatase of Streptococcus thermophilus (strain ATCC BAA-491 / LMD-9).